Reading from the N-terminus, the 291-residue chain is Elongation factor Ts (291 aa).

The segment at 79–82 is involved in Mg(2+) ion dislocation from EF-Tu; that stretch reads TDFV.

It belongs to the EF-Ts family.

It localises to the cytoplasm. Functionally, associates with the EF-Tu.GDP complex and induces the exchange of GDP to GTP. It remains bound to the aminoacyl-tRNA.EF-Tu.GTP complex up to the GTP hydrolysis stage on the ribosome. The chain is Elongation factor Ts from Leuconostoc mesenteroides subsp. mesenteroides (strain ATCC 8293 / DSM 20343 / BCRC 11652 / CCM 1803 / JCM 6124 / NCDO 523 / NBRC 100496 / NCIMB 8023 / NCTC 12954 / NRRL B-1118 / 37Y).